A 481-amino-acid polypeptide reads, in one-letter code: MIVRTQNSESKIKEFFEFCKENEVEFVDFRFSDIKGTWNHIAYSFGALTHGMLKEGIPFDASCFKGWQGIEHSDMILTPDLVRYFIDPFSADVSVVVFCDVYDVYKNQPYEKCPRSIAKKALQHLKDSGLGDVAYFGAENEFFIFDSIKIKDASNSQYYEVDSEEGEWNRDRSFENGVNFGHRPGKQGGYMPVPPTDTMMDIRTEIVKVLNQVGLETFVVHHEVAQAQGEVGVKFGDLVEAADNVQKLKYVVKMVAHLNGKTATFMPKPLYGDNGSGMHTHVSVWKNNENLFSGETYKGLSEFALHFLGGVLRHARGLAAFTNASTNSYKRLIPGYEAPSILTYSANNRSASVRIPYGISKNSARFEFRFPDSSSNPYLAFAAILMAGMDGVKNKIDPGEAMDINLFKLTLDEIREKGIKQMPHTLRRSLEEMLADKQYLKESQVFSEEFIQAYQSLKFNAEVFPWESKPHPFEFITTYSC.

Residues 22 to 106 enclose the GS beta-grasp domain; that stretch reads NEVEFVDFRF…VFCDVYDVYK (85 aa). The 368-residue stretch at 114 to 481 folds into the GS catalytic domain; sequence PRSIAKKALQ…PFEFITTYSC (368 aa). E139, E141, E223, and E230 together coordinate Mg(2+). L-glutamate contacts are provided by residues 274–275 and G275; that span reads NG. H279 is a binding site for Mg(2+). Residues 281–283 and S283 contribute to the ATP site; that span reads HVS. L-glutamate is bound by residues R331, E337, and R349. ATP contacts are provided by R349 and R354. E367 lines the Mg(2+) pocket. R369 is a binding site for L-glutamate.

It belongs to the glutamine synthetase family. As to quaternary structure, oligomer of 12 subunits arranged in the form of two hexameric ring. Mg(2+) serves as cofactor.

The protein localises to the cytoplasm. It carries out the reaction L-glutamate + NH4(+) + ATP = L-glutamine + ADP + phosphate + H(+). Its activity is regulated as follows. The activity of this enzyme could be controlled by adenylation under conditions of abundant glutamine. Catalyzes the ATP-dependent biosynthesis of glutamine from glutamate and ammonia. This Helicobacter pylori (strain ATCC 700392 / 26695) (Campylobacter pylori) protein is Glutamine synthetase.